We begin with the raw amino-acid sequence, 485 residues long: Sulfated surface glycoprotein 185 (485 aa).

A signal peptide spans 1 to 20; that stretch reads MSKLLLVALFGAIAVVATSA. N193 is a glycosylation site (N-linked (GlcNAc...) asparagine). A disordered region spans residues 212-317; the sequence is LSGPNVNPIG…PPVPPPPSPP (106 aa). Composition is skewed to pro residues over residues 221 to 234 and 241 to 317; these read GPAP…PSPQ and PPSP…PSPP. N347 carries N-linked (GlcNAc...) asparagine glycosylation.

Polymer. Intersubunit cross-links are formed between saccharide chains rather than between polypeptide chains. Post-translationally, hydroxylated on proline residues in the Pro-rich central domain. In terms of processing, glycosylated; contains sulfate-substituted glycans.

The extracellular matrix (ECM) of Volvox contains insoluble fibrous layers that surround individual cells at a distance to form contiguous cellular compartments. SSG 185 is the monomeric precursor of this substructure (C3Z structure). This is Sulfated surface glycoprotein 185 from Volvox carteri (Green alga).